Reading from the N-terminus, the 367-residue chain is Probable 7-methylxanthine methyltransferase 2 (367 aa).

Residue tyrosine 20 coordinates S-adenosyl-L-homocysteine. A theobromine-binding site is contributed by threonine 27. S-adenosyl-L-homocysteine is bound by residues cysteine 64, glutamine 69, aspartate 101, leucine 102, serine 134, and phenylalanine 135. Theobromine contacts are provided by tyrosine 152, histidine 155, and tryptophan 156. Residues asparagine 172, aspartate 258, phenylalanine 260, and asparagine 261 each contribute to the Mg(2+) site. Phenylalanine 313 contributes to the theobromine binding site.

It belongs to the methyltransferase superfamily. Type-7 methyltransferase family. Mg(2+) serves as cofactor.

It carries out the reaction 7-methylxanthine + S-adenosyl-L-methionine = theobromine + S-adenosyl-L-homocysteine + H(+). It participates in alkaloid biosynthesis. In terms of biological role, involved in the biosynthesis of theobromine. This chain is Probable 7-methylxanthine methyltransferase 2, found in Theobroma cacao (Cacao).